The chain runs to 160 residues: Cyclic pyranopterin monophosphate synthase (160 aa).

Substrate is bound by residues 77-79 and 114-115; these read MCH and ME. Residue aspartate 129 is part of the active site.

The protein belongs to the MoaC family. In terms of assembly, homohexamer; trimer of dimers.

The enzyme catalyses (8S)-3',8-cyclo-7,8-dihydroguanosine 5'-triphosphate = cyclic pyranopterin phosphate + diphosphate. The protein operates within cofactor biosynthesis; molybdopterin biosynthesis. In terms of biological role, catalyzes the conversion of (8S)-3',8-cyclo-7,8-dihydroguanosine 5'-triphosphate to cyclic pyranopterin monophosphate (cPMP). This is Cyclic pyranopterin monophosphate synthase from Listeria innocua serovar 6a (strain ATCC BAA-680 / CLIP 11262).